The chain runs to 315 residues: Homoserine kinase (315 aa).

97–107 (PPARGLGSSAT) is an ATP binding site.

This sequence belongs to the GHMP kinase family. Homoserine kinase subfamily.

Its subcellular location is the cytoplasm. The catalysed reaction is L-homoserine + ATP = O-phospho-L-homoserine + ADP + H(+). Its pathway is amino-acid biosynthesis; L-threonine biosynthesis; L-threonine from L-aspartate: step 4/5. In terms of biological role, catalyzes the ATP-dependent phosphorylation of L-homoserine to L-homoserine phosphate. The chain is Homoserine kinase from Synechococcus sp. (strain CC9311).